A 542-amino-acid chain; its full sequence is 3-(3-hydroxy-phenyl)propionate/3-hydroxycinnamic acid hydroxylase (542 aa).

Residues Ser10–Arg39 and Phe278–Asp288 contribute to the FAD site.

This sequence belongs to the PheA/TfdB FAD monooxygenase family. FAD serves as cofactor.

It catalyses the reaction 3-(3-hydroxyphenyl)propanoate + NADH + O2 + H(+) = 3-(2,3-dihydroxyphenyl)propanoate + NAD(+) + H2O. It carries out the reaction (2E)-3-(3-hydroxyphenyl)prop-2-enoate + NADH + O2 + H(+) = (2E)-3-(2,3-dihydroxyphenyl)prop-2-enoate + NAD(+) + H2O. It functions in the pathway aromatic compound metabolism; 3-phenylpropanoate degradation. Catalyzes the insertion of one atom of molecular oxygen into position 2 of the phenyl ring of 3-(3-hydroxyphenyl)propionate (3-HPP) and hydroxycinnamic acid (3HCI). The sequence is that of 3-(3-hydroxy-phenyl)propionate/3-hydroxycinnamic acid hydroxylase from Burkholderia cenocepacia (strain HI2424).